The following is a 358-amino-acid chain: MFDQLEIVEQRYEQLNELLSDPDIVSDTDKLREYSKEQADLQETVEVYREYKEVKQQLEEALEMMGEASDADEQEMIKEEINTLKPQIPELEERMKLLLIPKDPMDDKNVVMEIRGAAGGDEANIFAGDLFRMYSRFSEEQGWKIEVMETNEADHGGFKEISFIIIGKGAYSKLKFENGAHRVQRIPTTESGGRIHTSTATVAVLPEVEDVEIEIRQEDLRIETYRSSGSGGQHVNTTDSAVRITHIPTGIVATSSEKSQIKNREKALKLLKTRVFDAKLQEEQAKYSEQRKSAVGTGDRSERIRTYNYPQNRVTDHRIGLTIQKLDQIVEGKLGEIIDALTIAEQTSKLEALNDGVL.

Residue Gln-233 is modified to N5-methylglutamine.

This sequence belongs to the prokaryotic/mitochondrial release factor family. Methylated by PrmC. Methylation increases the termination efficiency of RF1.

The protein localises to the cytoplasm. Its function is as follows. Peptide chain release factor 1 directs the termination of translation in response to the peptide chain termination codons UAG and UAA. The protein is Peptide chain release factor 1 of Macrococcus caseolyticus (strain JCSC5402) (Macrococcoides caseolyticum).